We begin with the raw amino-acid sequence, 248 residues long: 3-deoxy-manno-octulosonate cytidylyltransferase (248 aa).

The protein belongs to the KdsB family.

Its subcellular location is the cytoplasm. The catalysed reaction is 3-deoxy-alpha-D-manno-oct-2-ulosonate + CTP = CMP-3-deoxy-beta-D-manno-octulosonate + diphosphate. It participates in nucleotide-sugar biosynthesis; CMP-3-deoxy-D-manno-octulosonate biosynthesis; CMP-3-deoxy-D-manno-octulosonate from 3-deoxy-D-manno-octulosonate and CTP: step 1/1. It functions in the pathway bacterial outer membrane biogenesis; lipopolysaccharide biosynthesis. Its function is as follows. Activates KDO (a required 8-carbon sugar) for incorporation into bacterial lipopolysaccharide in Gram-negative bacteria. The chain is 3-deoxy-manno-octulosonate cytidylyltransferase from Salmonella agona (strain SL483).